Here is a 510-residue protein sequence, read N- to C-terminus: MDIRAAEISAILKDQIKNFGQEAEVSEVGQVLSVGDGIARVYGLDNIQAGEMVEFENGTRGMALNLETDNVGIVIFGADREIKEGQTVKRTRAIVDAPVGKGLLGRVVDALGNPIDGKGPIQATERKRVDVKAPGIIPRKSVNEPMATGLKSIDALIPVGRGQRELIIGDRQTGKTAIALDTILNQKPLNVAGAPEGQKLYCVYVAIGQKRSTVAQFVKVLEEQGALEYSIIVAATASDPAPMQYIAPFTGCTMGEYFRDNGMHAVIIYDDLSKQAVAYRQMSLLLRRPPGREAYPGDVFYLHSRLLERAAKLNDDHGNGSLTALPVIETQANDVSAYIPTNVISITDGQIFLETDLFFQGIRPAVNVGLSVSRVGSSAQTKAMKKVAGKIKGELAQYREMAAFAQFGSDLDASTQRLLNRGSRLTELLKQPQFSPLKMEEQVCVIWAGTNGYLDKLPLGKVRAFEDGLLSLLRGKNVEILNTIRESRDLSDDTAAKLRSAVDGYAKTFV.

Residue 169 to 176 (GDRQTGKT) participates in ATP binding.

The protein belongs to the ATPase alpha/beta chains family. In terms of assembly, F-type ATPases have 2 components, CF(1) - the catalytic core - and CF(0) - the membrane proton channel. CF(1) has five subunits: alpha(3), beta(3), gamma(1), delta(1), epsilon(1). CF(0) has three main subunits: a(1), b(2) and c(9-12). The alpha and beta chains form an alternating ring which encloses part of the gamma chain. CF(1) is attached to CF(0) by a central stalk formed by the gamma and epsilon chains, while a peripheral stalk is formed by the delta and b chains.

It localises to the cell inner membrane. The enzyme catalyses ATP + H2O + 4 H(+)(in) = ADP + phosphate + 5 H(+)(out). Its function is as follows. Produces ATP from ADP in the presence of a proton gradient across the membrane. The alpha chain is a regulatory subunit. The protein is ATP synthase subunit alpha of Nitrobacter hamburgensis (strain DSM 10229 / NCIMB 13809 / X14).